The primary structure comprises 118 residues: Small ribosomal subunit protein uS13 (118 aa).

A disordered region spans residues Ser94–Lys118.

The protein belongs to the universal ribosomal protein uS13 family. As to quaternary structure, part of the 30S ribosomal subunit. Forms a loose heterodimer with protein S19. Forms two bridges to the 50S subunit in the 70S ribosome.

In terms of biological role, located at the top of the head of the 30S subunit, it contacts several helices of the 16S rRNA. In the 70S ribosome it contacts the 23S rRNA (bridge B1a) and protein L5 of the 50S subunit (bridge B1b), connecting the 2 subunits; these bridges are implicated in subunit movement. Contacts the tRNAs in the A and P-sites. This is Small ribosomal subunit protein uS13 from Vibrio vulnificus (strain CMCP6).